We begin with the raw amino-acid sequence, 400 residues long: Exodeoxyribonuclease 7 large subunit (400 aa).

Belongs to the XseA family. In terms of assembly, heterooligomer composed of large and small subunits.

It is found in the cytoplasm. It carries out the reaction Exonucleolytic cleavage in either 5'- to 3'- or 3'- to 5'-direction to yield nucleoside 5'-phosphates.. Its function is as follows. Bidirectionally degrades single-stranded DNA into large acid-insoluble oligonucleotides, which are then degraded further into small acid-soluble oligonucleotides. The chain is Exodeoxyribonuclease 7 large subunit from Clostridium perfringens (strain ATCC 13124 / DSM 756 / JCM 1290 / NCIMB 6125 / NCTC 8237 / Type A).